Reading from the N-terminus, the 382-residue chain is Lipid-A-disaccharide synthase (382 aa).

It belongs to the LpxB family.

The catalysed reaction is 2-N,3-O-bis[(3R)-3-hydroxytetradecanoyl]-alpha-D-glucosaminyl 1-phosphate + UDP-2-N,3-O-bis[(3R)-3-hydroxytetradecanoyl]-alpha-D-glucosamine = lipid A disaccharide (E. coli) + UDP + H(+). The enzyme catalyses a lipid X + a UDP-2-N,3-O-bis[(3R)-3-hydroxyacyl]-alpha-D-glucosamine = a lipid A disaccharide + UDP + H(+). Its pathway is glycolipid biosynthesis; lipid IV(A) biosynthesis; lipid IV(A) from (3R)-3-hydroxytetradecanoyl-[acyl-carrier-protein] and UDP-N-acetyl-alpha-D-glucosamine: step 5/6. Its function is as follows. Condensation of UDP-2,3-diacylglucosamine and 2,3-diacylglucosamine-1-phosphate to form lipid A disaccharide, a precursor of lipid A, a phosphorylated glycolipid that anchors the lipopolysaccharide to the outer membrane of the cell. This is Lipid-A-disaccharide synthase from Sodalis glossinidius (strain morsitans).